Here is a 418-residue protein sequence, read N- to C-terminus: Phosphopentomutase (418 aa).

The Mn(2+) site is built by aspartate 10, aspartate 297, histidine 302, aspartate 338, histidine 339, and histidine 350.

This sequence belongs to the phosphopentomutase family. It depends on Mn(2+) as a cofactor.

It localises to the cytoplasm. The catalysed reaction is 2-deoxy-alpha-D-ribose 1-phosphate = 2-deoxy-D-ribose 5-phosphate. It carries out the reaction alpha-D-ribose 1-phosphate = D-ribose 5-phosphate. It functions in the pathway carbohydrate degradation; 2-deoxy-D-ribose 1-phosphate degradation; D-glyceraldehyde 3-phosphate and acetaldehyde from 2-deoxy-alpha-D-ribose 1-phosphate: step 1/2. In terms of biological role, isomerase that catalyzes the conversion of deoxy-ribose 1-phosphate (dRib-1-P) and ribose 1-phosphate (Rib-1-P) to deoxy-ribose 5-phosphate (dRib-5-P) and ribose 5-phosphate (Rib-5-P), respectively. This chain is Phosphopentomutase, found in Chromohalobacter salexigens (strain ATCC BAA-138 / DSM 3043 / CIP 106854 / NCIMB 13768 / 1H11).